A 123-amino-acid chain; its full sequence is Large ribosomal subunit protein uL14 (123 aa).

The protein belongs to the universal ribosomal protein uL14 family. In terms of assembly, part of the 50S ribosomal subunit. Forms a cluster with proteins L3 and L19. In the 70S ribosome, L14 and L19 interact and together make contacts with the 16S rRNA in bridges B5 and B8.

Functionally, binds to 23S rRNA. Forms part of two intersubunit bridges in the 70S ribosome. The sequence is that of Large ribosomal subunit protein uL14 from Pectobacterium atrosepticum (strain SCRI 1043 / ATCC BAA-672) (Erwinia carotovora subsp. atroseptica).